Consider the following 99-residue polypeptide: MVKHSRGNRTRSRKLLKKSPRERGAVPSLGRLMLDLKEGERVVIKINSSTHSGMPHRRYQGKVGTILGKRGKSYEVKVKLGDKEKILIVRPEHLNQIKA.

A compositionally biased stretch (basic residues) spans 1 to 18 (MVKHSRGNRTRSRKLLKK). The tract at residues 1 to 26 (MVKHSRGNRTRSRKLLKKSPRERGAV) is disordered.

Belongs to the eukaryotic ribosomal protein eL21 family.

The polypeptide is Large ribosomal subunit protein eL21 (Metallosphaera sedula (strain ATCC 51363 / DSM 5348 / JCM 9185 / NBRC 15509 / TH2)).